The primary structure comprises 788 residues: Endonuclease MutS2 (788 aa).

332–339 contributes to the ATP binding site; the sequence is GPNTGGKT. Positions 713–788 constitute a Smr domain; it reads VDLRGMDAEE…GTGVTVVELK (76 aa).

This sequence belongs to the DNA mismatch repair MutS family. MutS2 subfamily. In terms of assembly, homodimer. Binds to stalled ribosomes, contacting rRNA.

Its function is as follows. Endonuclease that is involved in the suppression of homologous recombination and thus may have a key role in the control of bacterial genetic diversity. Functionally, acts as a ribosome collision sensor, splitting the ribosome into its 2 subunits. Detects stalled/collided 70S ribosomes which it binds and splits by an ATP-hydrolysis driven conformational change. Acts upstream of the ribosome quality control system (RQC), a ribosome-associated complex that mediates the extraction of incompletely synthesized nascent chains from stalled ribosomes and their subsequent degradation. Probably generates substrates for RQC. The polypeptide is Endonuclease MutS2 (Clostridium botulinum (strain Kyoto / Type A2)).